Here is a 186-residue protein sequence, read N- to C-terminus: Centromere protein M (186 aa).

Its subcellular location is the nucleus. The protein resides in the chromosome. It localises to the centromere. Probable component of a centromeric complex involved in assembly of kinetochore proteins, mitotic progression and chromosome segregation. In Danio rerio (Zebrafish), this protein is Centromere protein M (cenpm).